Reading from the N-terminus, the 607-residue chain is Pescadillo homolog (607 aa).

The disordered stretch occupies residues 301 to 341; that stretch reads ANVVEQSEKTTEDADEEPETEENLDEFKPADGADNEDSKSL. The segment covering 313 to 324 has biased composition (acidic residues); that stretch reads DADEEPETEENL. The segment covering 325–339 has biased composition (basic and acidic residues); it reads DEFKPADGADNEDSK. In terms of domain architecture, BRCT spans 348–441; that stretch reads SNTSLFSNFT…ILERTDLYAC (94 aa). Positions 497-604 form a coiled coil; sequence ENVEQIDDAE…RDIEKRKKLK (108 aa). The disordered stretch occupies residues 531–607; the sequence is QNSKSAKKTK…EKRKKLKVEN (77 aa). Composition is skewed to basic and acidic residues over residues 544–561 and 595–607; these read RDTL…KELS and RDIE…KVEN.

Belongs to the pescadillo family. In terms of assembly, component of the NOP7 complex, composed of erb1/SPBC4F6.13c, ppp1/SPBC19F5.05c and ytm1/SPAC890.04c. Within the NOP7 complex erb1/SPBC4F6.13c appears to interact directly with ppp1/SPBC19F5.05c and ytm1/SPAC890.04c. The NOP7 complex also associates with the 66S pre-ribosome.

It localises to the nucleus. Its subcellular location is the nucleoplasm. It is found in the nucleolus. In terms of biological role, component of the NOP7 complex, which is required for maturation of the 25S and 5.8S ribosomal RNAs and formation of the 60S ribosome. The sequence is that of Pescadillo homolog (ppp1) from Schizosaccharomyces pombe (strain 972 / ATCC 24843) (Fission yeast).